A 1082-amino-acid chain; its full sequence is Putative white-brown complex homolog protein 30 (1082 aa).

2 consecutive transmembrane segments (helical) span residues 12 to 32 (HIFLFFVFGLSFMSFALSLDG) and 292 to 312 (NIHAYGAILIASLSLLMIMVY). Over residues 329–348 (SREAAARHAKETTQARERWK) the composition is skewed to basic and acidic residues. Residues 329–437 (SREAAARHAK…QAPKGKQLHT (109 aa)) are disordered. The ABC transporter domain maps to 484–726 (VAFKDLTLTL…FADIGITVPD (243 aa)). 518–525 (GPSGAGKT) contributes to the ATP binding site. Residues 832–1029 (RQYRYFVGRV…TLEAFVLSNA (198 aa)) enclose the ABC transmembrane type-2 domain. 5 consecutive transmembrane segments (helical) span residues 853–873 (ALDFLILLVAGACLGTLAKVN), 877–897 (IDTLGYTYTIIAVSLLCKISA), 958–978 (YIVLVCLVYCVTGMAYIFAIL), 979–999 (YSPSAAQLLSVLVPVVMTLIA), and 1054–1074 (WILCLIVLVLMGLICRFIAYF).

The protein belongs to the ABC transporter superfamily. ABCG family. Eye pigment precursor importer (TC 3.A.1.204) subfamily.

It is found in the membrane. In Arabidopsis thaliana (Mouse-ear cress), this protein is Putative white-brown complex homolog protein 30 (WBC30).